The chain runs to 634 residues: Threonine--tRNA ligase (634 aa).

Positions 1–142 are editing domain; that stretch reads MQLLLIHSDY…LSRSIRPEGA (142 aa). The catalytic stretch occupies residues 214 to 513; sequence PHVELMRRLE…TEEGKVPMLP (300 aa). Cys306, His358, and His482 together coordinate Zn(2+).

The protein belongs to the class-II aminoacyl-tRNA synthetase family. In terms of assembly, homodimer. The cofactor is Zn(2+).

The protein localises to the cytoplasm. It catalyses the reaction tRNA(Thr) + L-threonine + ATP = L-threonyl-tRNA(Thr) + AMP + diphosphate + H(+). Functionally, catalyzes the attachment of threonine to tRNA(Thr) in a two-step reaction: L-threonine is first activated by ATP to form Thr-AMP and then transferred to the acceptor end of tRNA(Thr). Edits incorrectly charged L-seryl-tRNA(Thr) probably via its editing domain (tested with total bovine tRNA). Activates L-serine, but does not detectably transfer it to tRNA (tested with total bovine tRNA). The protein is Threonine--tRNA ligase of Methanosarcina mazei (strain ATCC BAA-159 / DSM 3647 / Goe1 / Go1 / JCM 11833 / OCM 88) (Methanosarcina frisia).